We begin with the raw amino-acid sequence, 149 residues long: Arginine repressor (149 aa).

This sequence belongs to the ArgR family.

The protein resides in the cytoplasm. Its pathway is amino-acid biosynthesis; L-arginine biosynthesis [regulation]. Its function is as follows. Regulates arginine biosynthesis genes. The polypeptide is Arginine repressor (Halalkalibacterium halodurans (strain ATCC BAA-125 / DSM 18197 / FERM 7344 / JCM 9153 / C-125) (Bacillus halodurans)).